The primary structure comprises 213 residues: MKKILFLTVICFCLSSIKAYANNNIHLSEFKNYLRTIKSVAIDFTQEDSYGKIVKGKLLIQKPYNFRCNYYPPFPLVIIGTKNFVSMYDYDMEQVSRISPSENIFNFLLEDNVDFDKDFVFESVINKGNIFNITIYHTRTEKRSEITFNKNIKQIEKLKIFEDHNIVTITFDKITKVQKFSDDLFKFKNPEIFSPPERLIKSEIEKKYVVSSK.

An N-terminal signal peptide occupies residues 1–21 (MKKILFLTVICFCLSSIKAYA).

This is an uncharacterized protein from Rickettsia prowazekii (strain Madrid E).